A 169-amino-acid polypeptide reads, in one-letter code: MATSSAVLFLLLAVFAAGASAATFRITNNCGFTVWPAGIPVGGGFQLNSKQSSNINVPAGTSAGRIWGRTGCSFNNGRGSCATGDCAGALSCTLSGQPATLAEYTIGGSQDFYDISVIDGYNLAMDFSCSTGVALKCRDSGCPDAYHHPNDVATHACNGNSNYQITFCP.

A signal peptide spans 1–21 (MATSSAVLFLLLAVFAAGASA).

The protein belongs to the thaumatin family.

Associated with resistance against stem rust fungi. This is Thaumatin-like pathogenesis-related protein 3 (RASTL-3) from Avena sativa (Oat).